The following is a 489-amino-acid chain: Mitochondrial-processing peptidase subunit beta (489 aa).

Residues 1–45 (MAAAAVSRTLLPVAGRRLWGFTRRLPLRAAAAQPLYFGGDRLRST) constitute a mitochondrion transit peptide. His-101 contacts Zn(2+). Glu-104 functions as the Proton acceptor in the catalytic mechanism. Zn(2+) contacts are provided by His-105 and Glu-181.

This sequence belongs to the peptidase M16 family. As to quaternary structure, heterodimer of PMPCA (alpha) and PMPCB (beta) subunits, forming the mitochondrial processing protease (MPP) in which PMPCA is involved in substrate recognition and binding and PMPCB is the catalytic subunit. Requires Zn(2+) as cofactor.

It localises to the mitochondrion matrix. It catalyses the reaction Release of N-terminal transit peptides from precursor proteins imported into the mitochondrion, typically with Arg in position P2.. Binding to PMPCA is required for catalytic activity. Catalytic subunit of the essential mitochondrial processing protease (MPP), which cleaves the mitochondrial sequence off newly imported precursors proteins. Preferentially, cleaves after an arginine at position P2. Required for PINK1 turnover by coupling PINK1 mitochondrial import and cleavage, which results in subsequent PINK1 proteolysis. The chain is Mitochondrial-processing peptidase subunit beta (Pmpcb) from Rattus norvegicus (Rat).